The chain runs to 143 residues: Large ribosomal subunit protein uL11 (143 aa).

This sequence belongs to the universal ribosomal protein uL11 family. In terms of assembly, part of the ribosomal stalk of the 50S ribosomal subunit. Interacts with L10 and the large rRNA to form the base of the stalk. L10 forms an elongated spine to which L12 dimers bind in a sequential fashion forming a multimeric L10(L12)X complex. One or more lysine residues are methylated.

Its function is as follows. Forms part of the ribosomal stalk which helps the ribosome interact with GTP-bound translation factors. This is Large ribosomal subunit protein uL11 from Ectopseudomonas mendocina (strain ymp) (Pseudomonas mendocina).